The chain runs to 315 residues: Tetraacyldisaccharide 4'-kinase (315 aa).

52-59 (TVGGTGKT) is an ATP binding site.

The protein belongs to the LpxK family.

It carries out the reaction a lipid A disaccharide + ATP = a lipid IVA + ADP + H(+). Its pathway is glycolipid biosynthesis; lipid IV(A) biosynthesis; lipid IV(A) from (3R)-3-hydroxytetradecanoyl-[acyl-carrier-protein] and UDP-N-acetyl-alpha-D-glucosamine: step 6/6. Functionally, transfers the gamma-phosphate of ATP to the 4'-position of a tetraacyldisaccharide 1-phosphate intermediate (termed DS-1-P) to form tetraacyldisaccharide 1,4'-bis-phosphate (lipid IVA). The chain is Tetraacyldisaccharide 4'-kinase from Ruthia magnifica subsp. Calyptogena magnifica.